A 506-amino-acid chain; its full sequence is 2-isopropylmalate synthase (506 aa).

Residues 4–266 (ILFMDTTLRD…EPSMTLKEIK (263 aa)) enclose the Pyruvate carboxyltransferase domain. Mn(2+)-binding residues include D13, H201, H203, and N237. The interval 390 to 506 (NITQLQVHFV…KLKSFIQLVK (117 aa)) is regulatory domain.

The protein belongs to the alpha-IPM synthase/homocitrate synthase family. LeuA type 1 subfamily. In terms of assembly, homodimer. Mn(2+) serves as cofactor.

It localises to the cytoplasm. The catalysed reaction is 3-methyl-2-oxobutanoate + acetyl-CoA + H2O = (2S)-2-isopropylmalate + CoA + H(+). The protein operates within amino-acid biosynthesis; L-leucine biosynthesis; L-leucine from 3-methyl-2-oxobutanoate: step 1/4. Its function is as follows. Catalyzes the condensation of the acetyl group of acetyl-CoA with 3-methyl-2-oxobutanoate (2-ketoisovalerate) to form 3-carboxy-3-hydroxy-4-methylpentanoate (2-isopropylmalate). The chain is 2-isopropylmalate synthase from Bacillus thuringiensis (strain Al Hakam).